Here is a 495-residue protein sequence, read N- to C-terminus: Glutamate--tRNA ligase (495 aa).

Positions 12-22 (PSPTGHLHIGN) match the 'HIGH' region motif. The 'KMSKS' region motif lies at 259–263 (KLSKR). Lys-262 provides a ligand contact to ATP.

Belongs to the class-I aminoacyl-tRNA synthetase family. Glutamate--tRNA ligase type 1 subfamily. In terms of assembly, monomer.

The protein resides in the cytoplasm. It catalyses the reaction tRNA(Glu) + L-glutamate + ATP = L-glutamyl-tRNA(Glu) + AMP + diphosphate. In terms of biological role, catalyzes the attachment of glutamate to tRNA(Glu) in a two-step reaction: glutamate is first activated by ATP to form Glu-AMP and then transferred to the acceptor end of tRNA(Glu). The chain is Glutamate--tRNA ligase from Ligilactobacillus salivarius (strain UCC118) (Lactobacillus salivarius).